Here is a 243-residue protein sequence, read N- to C-terminus: UPF0758 protein sll0766 (243 aa).

Positions 113–235 constitute an MPN domain; the sequence is VVDSPEAAAI…HQSLRQCTDL (123 aa). Zn(2+) is bound by residues His-184, His-186, and Asp-197. A JAMM motif motif is present at residues 184-197; the sequence is HNHPSGGLEPSPED.

This sequence belongs to the UPF0758 family.

In Synechocystis sp. (strain ATCC 27184 / PCC 6803 / Kazusa), this protein is UPF0758 protein sll0766.